The primary structure comprises 160 residues: Putative 4-hydroxy-4-methyl-2-oxoglutarate aldolase (160 aa).

Substrate contacts are provided by residues 75–78 and Arg97; that span reads GDQL. Residue Asp98 participates in a divalent metal cation binding.

It belongs to the class II aldolase/RraA-like family. Homotrimer. Requires a divalent metal cation as cofactor.

The enzyme catalyses 4-hydroxy-4-methyl-2-oxoglutarate = 2 pyruvate. The catalysed reaction is oxaloacetate + H(+) = pyruvate + CO2. Its function is as follows. Catalyzes the aldol cleavage of 4-hydroxy-4-methyl-2-oxoglutarate (HMG) into 2 molecules of pyruvate. Also contains a secondary oxaloacetate (OAA) decarboxylase activity due to the common pyruvate enolate transition state formed following C-C bond cleavage in the retro-aldol and decarboxylation reactions. The chain is Putative 4-hydroxy-4-methyl-2-oxoglutarate aldolase from Vibrio vulnificus (strain YJ016).